The chain runs to 393 residues: DNA-directed RNA polymerase subunit Rpo1C (393 aa).

It belongs to the RNA polymerase beta' chain family. Part of the RNA polymerase complex.

It is found in the cytoplasm. It carries out the reaction RNA(n) + a ribonucleoside 5'-triphosphate = RNA(n+1) + diphosphate. Its function is as follows. DNA-dependent RNA polymerase (RNAP) catalyzes the transcription of DNA into RNA using the four ribonucleoside triphosphates as substrates. Forms part of the jaw domain. The protein is DNA-directed RNA polymerase subunit Rpo1C of Thermococcus celer.